A 131-amino-acid chain; its full sequence is Increased copper sensitivity protein 3 (131 aa).

Transmembrane regions (helical) follow at residues 35–55 (ISVL…IFFS) and 74–94 (IALT…IIAF).

Its subcellular location is the membrane. The sequence is that of Increased copper sensitivity protein 3 (ICS3) from Saccharomyces cerevisiae (strain ATCC 204508 / S288c) (Baker's yeast).